The primary structure comprises 299 residues: Urease accessory protein UreD (299 aa).

Belongs to the UreD family. As to quaternary structure, ureD, UreF and UreG form a complex that acts as a GTP-hydrolysis-dependent molecular chaperone, activating the urease apoprotein by helping to assemble the nickel containing metallocenter of UreC. The UreE protein probably delivers the nickel.

The protein localises to the cytoplasm. Its function is as follows. Required for maturation of urease via the functional incorporation of the urease nickel metallocenter. The chain is Urease accessory protein UreD from Prochlorococcus marinus (strain MIT 9303).